We begin with the raw amino-acid sequence, 185 residues long: Threonylcarbamoyl-AMP synthase (185 aa).

Positions 4–185 constitute a YrdC-like domain; sequence SWRVQQAAQD…IATGQVMRAG (182 aa).

The protein belongs to the SUA5 family. TsaC subfamily.

The protein resides in the cytoplasm. It catalyses the reaction L-threonine + hydrogencarbonate + ATP = L-threonylcarbamoyladenylate + diphosphate + H2O. Required for the formation of a threonylcarbamoyl group on adenosine at position 37 (t(6)A37) in tRNAs that read codons beginning with adenine. Catalyzes the conversion of L-threonine, HCO(3)(-)/CO(2) and ATP to give threonylcarbamoyl-AMP (TC-AMP) as the acyladenylate intermediate, with the release of diphosphate. The chain is Threonylcarbamoyl-AMP synthase from Pseudomonas savastanoi pv. phaseolicola (strain 1448A / Race 6) (Pseudomonas syringae pv. phaseolicola (strain 1448A / Race 6)).